The following is a 346-amino-acid chain: Hydroxymethylglutaryl-CoA synthase (346 aa).

A (3S)-3-hydroxy-3-methylglutaryl-CoA-binding site is contributed by D28. E80 serves as the catalytic Proton donor/acceptor. 2 residues coordinate (3S)-3-hydroxy-3-methylglutaryl-CoA: C112 and T153. The Acyl-thioester intermediate role is filled by C112. R199 is a binding site for CoA. Residues T201 and H234 each coordinate (3S)-3-hydroxy-3-methylglutaryl-CoA. Residue H234 is the Proton donor/acceptor of the active site. Residue K239 participates in CoA binding. Positions 243, 266, and 296 each coordinate (3S)-3-hydroxy-3-methylglutaryl-CoA.

The protein belongs to the thiolase-like superfamily. Archaeal HMG-CoA synthase family. Interacts with acetoacetyl-CoA thiolase that catalyzes the precedent step in the pathway and with a DUF35 protein. The acetoacetyl-CoA thiolase/HMG-CoA synthase complex channels the intermediate via a fused CoA-binding site, which allows for efficient coupling of the endergonic thiolase reaction with the exergonic HMGCS reaction.

It carries out the reaction acetoacetyl-CoA + acetyl-CoA + H2O = (3S)-3-hydroxy-3-methylglutaryl-CoA + CoA + H(+). The protein operates within metabolic intermediate biosynthesis; (R)-mevalonate biosynthesis; (R)-mevalonate from acetyl-CoA: step 2/3. Catalyzes the condensation of acetyl-CoA with acetoacetyl-CoA to form 3-hydroxy-3-methylglutaryl-CoA (HMG-CoA). Functions in the mevalonate (MVA) pathway leading to isopentenyl diphosphate (IPP), a key precursor for the biosynthesis of isoprenoid compounds that are building blocks of archaeal membrane lipids. This Methanosphaera stadtmanae (strain ATCC 43021 / DSM 3091 / JCM 11832 / MCB-3) protein is Hydroxymethylglutaryl-CoA synthase.